The sequence spans 366 residues: Chorismate synthase (366 aa).

Residue arginine 48 coordinates NADP(+). FMN-binding positions include 131 to 133 (RAS), 243 to 244 (NA), glycine 288, 303 to 307 (KPTSS), and arginine 329.

The protein belongs to the chorismate synthase family. Homotetramer. Requires FMNH2 as cofactor.

The enzyme catalyses 5-O-(1-carboxyvinyl)-3-phosphoshikimate = chorismate + phosphate. It participates in metabolic intermediate biosynthesis; chorismate biosynthesis; chorismate from D-erythrose 4-phosphate and phosphoenolpyruvate: step 7/7. Catalyzes the anti-1,4-elimination of the C-3 phosphate and the C-6 proR hydrogen from 5-enolpyruvylshikimate-3-phosphate (EPSP) to yield chorismate, which is the branch point compound that serves as the starting substrate for the three terminal pathways of aromatic amino acid biosynthesis. This reaction introduces a second double bond into the aromatic ring system. The sequence is that of Chorismate synthase from Bartonella henselae (strain ATCC 49882 / DSM 28221 / CCUG 30454 / Houston 1) (Rochalimaea henselae).